The following is a 142-amino-acid chain: Hemoglobin subunit alpha-B (142 aa).

One can recognise a Globin domain in the interval 2-142; that stretch reads VLSPTDKSNV…VSTVLTSKYR (141 aa). His59 contributes to the O2 binding site. His88 is a heme b binding site.

The protein belongs to the globin family. As to quaternary structure, heterotetramer of two alpha chains and two beta chains. In terms of tissue distribution, red blood cells.

Involved in oxygen transport from the lung to the various peripheral tissues. The polypeptide is Hemoglobin subunit alpha-B (HBAB) (Otolemur crassicaudatus (Brown greater galago)).